The primary structure comprises 482 residues: UDP-N-acetylmuramate--L-alanine ligase (482 aa).

ATP is bound at residue 129–135 (GTHGKTT).

The protein belongs to the MurCDEF family.

It is found in the cytoplasm. The enzyme catalyses UDP-N-acetyl-alpha-D-muramate + L-alanine + ATP = UDP-N-acetyl-alpha-D-muramoyl-L-alanine + ADP + phosphate + H(+). It participates in cell wall biogenesis; peptidoglycan biosynthesis. Its function is as follows. Cell wall formation. The sequence is that of UDP-N-acetylmuramate--L-alanine ligase from Acinetobacter baumannii (strain AB307-0294).